Reading from the N-terminus, the 362-residue chain is tRNA-specific 2-thiouridylase MnmA (362 aa).

Residues 13 to 20 and methionine 39 contribute to the ATP site; that span reads GLSGGVDS. Residues 99–101 are interaction with target base in tRNA; sequence NPD. Cysteine 104 acts as the Nucleophile in catalysis. A disulfide bridge links cysteine 104 with cysteine 200. Glycine 128 contacts ATP. The tract at residues 150–152 is interaction with tRNA; it reads KDQ. The Cysteine persulfide intermediate role is filled by cysteine 200. Residues 310-311 are interaction with tRNA; it reads RY.

Belongs to the MnmA/TRMU family.

The protein resides in the cytoplasm. The catalysed reaction is S-sulfanyl-L-cysteinyl-[protein] + uridine(34) in tRNA + AH2 + ATP = 2-thiouridine(34) in tRNA + L-cysteinyl-[protein] + A + AMP + diphosphate + H(+). Catalyzes the 2-thiolation of uridine at the wobble position (U34) of tRNA, leading to the formation of s(2)U34. This is tRNA-specific 2-thiouridylase MnmA from Vesicomyosocius okutanii subsp. Calyptogena okutanii (strain HA).